We begin with the raw amino-acid sequence, 415 residues long: Serine hydroxymethyltransferase (415 aa).

Residues Leu122 and 126–128 (GHL) each bind (6S)-5,6,7,8-tetrahydrofolate. Residue Lys230 is modified to N6-(pyridoxal phosphate)lysine.

It belongs to the SHMT family. In terms of assembly, homodimer. It depends on pyridoxal 5'-phosphate as a cofactor.

The protein localises to the cytoplasm. The catalysed reaction is (6R)-5,10-methylene-5,6,7,8-tetrahydrofolate + glycine + H2O = (6S)-5,6,7,8-tetrahydrofolate + L-serine. The protein operates within one-carbon metabolism; tetrahydrofolate interconversion. It participates in amino-acid biosynthesis; glycine biosynthesis; glycine from L-serine: step 1/1. Its function is as follows. Catalyzes the reversible interconversion of serine and glycine with tetrahydrofolate (THF) serving as the one-carbon carrier. This reaction serves as the major source of one-carbon groups required for the biosynthesis of purines, thymidylate, methionine, and other important biomolecules. Also exhibits THF-independent aldolase activity toward beta-hydroxyamino acids, producing glycine and aldehydes, via a retro-aldol mechanism. This is Serine hydroxymethyltransferase from Cupriavidus necator (strain ATCC 17699 / DSM 428 / KCTC 22496 / NCIMB 10442 / H16 / Stanier 337) (Ralstonia eutropha).